A 113-amino-acid chain; its full sequence is U11-theraphotoxin-Hhn1a (113 aa).

A signal peptide spans 1–21; sequence MNTVRVTFLLVFVLAVSLGRA. Residues 22-74 constitute a propeptide that is removed on maturation; it reads DKDENRMEMQEKTEQGKSYLDFAENLLLQKLEELEAKLLEEDSEESRNSRQKR. Intrachain disulfides connect cysteine 75–cysteine 90, cysteine 82–cysteine 95, and cysteine 89–cysteine 110.

Belongs to the neurotoxin 14 (magi-1) family. 01 (HNTX-16) subfamily. In terms of tissue distribution, expressed by the venom gland.

The protein localises to the secreted. Probable ion channel inhibitor. This is U11-theraphotoxin-Hhn1a from Cyriopagopus hainanus (Chinese bird spider).